A 228-amino-acid chain; its full sequence is Ribose-5-phosphate isomerase A (228 aa).

Substrate is bound by residues 29-32, 85-88, and 98-101; these read TGST, DGAD, and KGGG. Catalysis depends on E107, which acts as the Proton acceptor. Residue K125 participates in substrate binding.

Belongs to the ribose 5-phosphate isomerase family. Homodimer.

The catalysed reaction is aldehydo-D-ribose 5-phosphate = D-ribulose 5-phosphate. It functions in the pathway carbohydrate degradation; pentose phosphate pathway; D-ribose 5-phosphate from D-ribulose 5-phosphate (non-oxidative stage): step 1/1. Functionally, catalyzes the reversible conversion of ribose-5-phosphate to ribulose 5-phosphate. This chain is Ribose-5-phosphate isomerase A, found in Staphylococcus aureus (strain Mu50 / ATCC 700699).